Reading from the N-terminus, the 137-residue chain is Cellular retinoic acid-binding protein 1 (137 aa).

Positions 21–31 (KALGVNAMLRK) match the Nuclear localization signal motif. 132–134 (RIY) is an all-trans-retinoate binding site.

It belongs to the calycin superfamily. Fatty-acid binding protein (FABP) family.

It localises to the cytoplasm. Its function is as follows. Cytosolic CRABPs may regulate the access of retinoic acid to the nuclear retinoic acid receptors. The protein is Cellular retinoic acid-binding protein 1 (CRABP1) of Gallus gallus (Chicken).